A 332-amino-acid chain; its full sequence is HPr kinase/phosphorylase (332 aa).

Residues histidine 153 and lysine 174 contribute to the active site. Position 168-175 (168-175) interacts with ATP; that stretch reads GKSGLGKS. Serine 175 provides a ligand contact to Mg(2+). Residue aspartate 192 is the Proton acceptor; for phosphorylation activity. Proton donor; for dephosphorylation activity of the active site. The tract at residues 217 to 226 is important for the catalytic mechanism of both phosphorylation and dephosphorylation; the sequence is MEIRGLGVVD. Glutamate 218 is a Mg(2+) binding site. Arginine 259 is an active-site residue. An important for the catalytic mechanism of dephosphorylation region spans residues 280-285; it reads PIFPGK.

Belongs to the HPrK/P family. Homohexamer. Requires Mg(2+) as cofactor.

The enzyme catalyses [HPr protein]-L-serine + ATP = [HPr protein]-O-phospho-L-serine + ADP + H(+). It catalyses the reaction [HPr protein]-O-phospho-L-serine + phosphate + H(+) = [HPr protein]-L-serine + diphosphate. Catalyzes the ATP- as well as the pyrophosphate-dependent phosphorylation of a specific serine residue in HPr, a phosphocarrier protein of the phosphoenolpyruvate-dependent sugar phosphotransferase system (PTS). HprK/P also catalyzes the pyrophosphate-producing, inorganic phosphate-dependent dephosphorylation (phosphorolysis) of seryl-phosphorylated HPr (P-Ser-HPr). The chain is HPr kinase/phosphorylase from Chlorobium luteolum (strain DSM 273 / BCRC 81028 / 2530) (Pelodictyon luteolum).